Reading from the N-terminus, the 236-residue chain is Purine nucleoside phosphorylase DeoD-type (236 aa).

His5 provides a ligand contact to a purine D-ribonucleoside. Phosphate contacts are provided by residues Gly21, Arg25, Arg44, and Arg88–Ser91. Residues Glu180–Glu182 and Ser204–Asp205 contribute to the a purine D-ribonucleoside site. The active-site Proton donor is Asp205.

The protein belongs to the PNP/UDP phosphorylase family. In terms of assembly, homohexamer; trimer of homodimers.

It catalyses the reaction a purine D-ribonucleoside + phosphate = a purine nucleobase + alpha-D-ribose 1-phosphate. The catalysed reaction is a purine 2'-deoxy-D-ribonucleoside + phosphate = a purine nucleobase + 2-deoxy-alpha-D-ribose 1-phosphate. Catalyzes the reversible phosphorolytic breakdown of the N-glycosidic bond in the beta-(deoxy)ribonucleoside molecules, with the formation of the corresponding free purine bases and pentose-1-phosphate. This is Purine nucleoside phosphorylase DeoD-type from Chromobacterium violaceum (strain ATCC 12472 / DSM 30191 / JCM 1249 / CCUG 213 / NBRC 12614 / NCIMB 9131 / NCTC 9757 / MK).